Here is a 98-residue protein sequence, read N- to C-terminus: Integration host factor subunit alpha (98 aa).

Residues 49-71 are disordered; it reads FGNFDLRDKNQRPGRNPKTGEDI.

The protein belongs to the bacterial histone-like protein family. As to quaternary structure, heterodimer of an alpha and a beta chain.

Functionally, this protein is one of the two subunits of integration host factor, a specific DNA-binding protein that functions in genetic recombination as well as in transcriptional and translational control. This chain is Integration host factor subunit alpha, found in Edwardsiella ictaluri (strain 93-146).